A 260-amino-acid chain; its full sequence is Transcription factor SUM-1 (260 aa).

Positions 112–163 constitute a bHLH domain; that stretch reads DKRKAATLRERRRLRKVNEAFEALKRHTCANPNQRLPKVEILRNAIEYIEKL. Positions 171–208 are disordered; the sequence is KANGDSEMDSAETSSNTSDAMTDGSSPGSYSSDKAQQY. Over residues 181–205 the composition is skewed to polar residues; the sequence is AETSSNTSDAMTDGSSPGSYSSDKA.

As to quaternary structure, efficient DNA binding requires dimerization with another bHLH protein. Homodimer, and heterodimer with the ubiquitous bHLH protein E12.

Its subcellular location is the nucleus. Its function is as follows. Regulatory factor during embryogenesis. Conversion of pluripotent secondary mesenchyme cells to myogenic cells. It binds to the MCK enhancer element. The chain is Transcription factor SUM-1 (SUM-1) from Lytechinus variegatus (Green sea urchin).